The chain runs to 486 residues: Arginine/agmatine antiporter (486 aa).

A run of 12 helical transmembrane segments spans residues 12 to 32, 41 to 61, 85 to 105, 132 to 152, 160 to 180, 211 to 231, 242 to 262, 296 to 316, 341 to 361, 367 to 387, 418 to 438, and 461 to 481; these read LGAIALAGMVISSMIGGGIFS, AGVGAIILAWILTGVGMFFIA, GFGPYIGFTIGWGYWLCQIFG, PAILGGSILIWVFNFIVLKGI, IIGTVGKLVPLIVFIIITAFL, STMLVTLWAFIGIEGAVVMSA, ATILGFTGCLTVYILLSILPF, VGLLIAVLSSWLSWTMIVAEI, VSLYVTSALMQIAMLLVYFST, MLSITGVMVLPAYFASAAFLV, IWLIYAGGLKYLLMAIILLAL, and EVTEITIIAFLALLAIFLFST.

Belongs to the amino acid-polyamine-organocation (APC) superfamily. Basic amino acid/polyamine antiporter (APA) (TC 2.A.3.2) family.

It is found in the cell inner membrane. Functionally, catalyzes the exchange of L-arginine for agmatine. The arginine uptake by the bacterium in the macrophage may be a virulence factor against the host innate immune response. This Chlamydia abortus (strain DSM 27085 / S26/3) (Chlamydophila abortus) protein is Arginine/agmatine antiporter (aaxC).